A 98-amino-acid polypeptide reads, in one-letter code: NADH-ubiquinone oxidoreductase chain 4L (98 aa).

The next 3 helical transmembrane spans lie at 1-21 (MSLIHINIFLAFTVSLMGLLM), 29-49 (SLLCLEGMMLSLFIMATMMVL), and 61-81 (IILLVFAACEAALGLSLLVMI).

This sequence belongs to the complex I subunit 4L family. In terms of assembly, core subunit of respiratory chain NADH dehydrogenase (Complex I) which is composed of 45 different subunits.

It localises to the mitochondrion inner membrane. It carries out the reaction a ubiquinone + NADH + 5 H(+)(in) = a ubiquinol + NAD(+) + 4 H(+)(out). Functionally, core subunit of the mitochondrial membrane respiratory chain NADH dehydrogenase (Complex I) which catalyzes electron transfer from NADH through the respiratory chain, using ubiquinone as an electron acceptor. Part of the enzyme membrane arm which is embedded in the lipid bilayer and involved in proton translocation. This chain is NADH-ubiquinone oxidoreductase chain 4L (MT-ND4L), found in Rhinoceros unicornis (Greater Indian rhinoceros).